Reading from the N-terminus, the 1379-residue chain is Increased rDNA silencing protein 4 homolog (1379 aa).

Disordered regions lie at residues methionine 1–serine 25, threonine 138–arginine 159, glutamate 240–serine 314, serine 337–methionine 370, alanine 534–glutamine 573, threonine 768–glycine 816, aspartate 1047–glutamine 1110, and alanine 1168–tyrosine 1208. Residues proline 250–lysine 259 are compositionally biased toward basic and acidic residues. Polar residues predominate over residues alanine 262 to leucine 287. The segment covering serine 541–serine 555 has biased composition (low complexity). Residues proline 562–glutamine 573 are compositionally biased toward polar residues. Residues leucine 770 to serine 780 show a composition bias toward basic residues. Acidic residues predominate over residues aspartate 793–glutamate 802. An EH domain is found at alanine 1240 to methionine 1329. An EF-hand domain is found at alanine 1273 to tyrosine 1308.

The protein belongs to the IRS4 family.

Positive regulator of phosphatidylinositol 4,5-bisphosphate turnover and negatively regulates signaling through the cell integrity pathway. Involved in rDNA silencing. The sequence is that of Increased rDNA silencing protein 4 homolog from Schizosaccharomyces pombe (strain 972 / ATCC 24843) (Fission yeast).